Reading from the N-terminus, the 200-residue chain is Large ribosomal subunit protein uL4 (200 aa).

A disordered region spans residues 38–72 (GRQGSKQQKTRSDVSGGGKRPWRQKGTGRARAGTI).

This sequence belongs to the universal ribosomal protein uL4 family. In terms of assembly, part of the 50S ribosomal subunit.

In terms of biological role, one of the primary rRNA binding proteins, this protein initially binds near the 5'-end of the 23S rRNA. It is important during the early stages of 50S assembly. It makes multiple contacts with different domains of the 23S rRNA in the assembled 50S subunit and ribosome. Its function is as follows. Forms part of the polypeptide exit tunnel. In Pseudomonas fluorescens (strain ATCC BAA-477 / NRRL B-23932 / Pf-5), this protein is Large ribosomal subunit protein uL4.